The chain runs to 154 residues: Large ribosomal subunit protein uL30 (154 aa).

Belongs to the universal ribosomal protein uL30 family. Part of the 50S ribosomal subunit.

This Methanocaldococcus jannaschii (strain ATCC 43067 / DSM 2661 / JAL-1 / JCM 10045 / NBRC 100440) (Methanococcus jannaschii) protein is Large ribosomal subunit protein uL30.